Here is an 876-residue protein sequence, read N- to C-terminus: Alanine--tRNA ligase (876 aa).

His-564, His-568, Cys-666, and His-670 together coordinate Zn(2+).

The protein belongs to the class-II aminoacyl-tRNA synthetase family. Zn(2+) is required as a cofactor.

Its subcellular location is the cytoplasm. The enzyme catalyses tRNA(Ala) + L-alanine + ATP = L-alanyl-tRNA(Ala) + AMP + diphosphate. Catalyzes the attachment of alanine to tRNA(Ala) in a two-step reaction: alanine is first activated by ATP to form Ala-AMP and then transferred to the acceptor end of tRNA(Ala). Also edits incorrectly charged Ser-tRNA(Ala) and Gly-tRNA(Ala) via its editing domain. The chain is Alanine--tRNA ligase from Colwellia psychrerythraea (strain 34H / ATCC BAA-681) (Vibrio psychroerythus).